The chain runs to 105 residues: Dynein axonemal light chain 4 (105 aa).

It belongs to the dynein light chain family. In terms of assembly, consists of at least two heavy chains and a number of intermediate and light chains.

Its subcellular location is the cytoplasm. It is found in the cytoskeleton. The protein resides in the cilium axoneme. Force generating protein of respiratory cilia. Produces force towards the minus ends of microtubules. Dynein has ATPase activity. The protein is Dynein axonemal light chain 4 (DNAL4) of Bos taurus (Bovine).